We begin with the raw amino-acid sequence, 294 residues long: Beta-lactamase (294 aa).

A signal peptide spans 1 to 27; it reads MFKKRGRQTVLIAAVLAFFTASSPLLA. The active-site Acyl-ester intermediate is Ser76. Catalysis depends on Glu174, which acts as the Proton acceptor. 240–242 serves as a coordination point for substrate; that stretch reads KTG.

It belongs to the class-A beta-lactamase family.

The catalysed reaction is a beta-lactam + H2O = a substituted beta-amino acid. This chain is Beta-lactamase, found in Citrobacter koseri (Citrobacter diversus).